The primary structure comprises 125 residues: Gem-associated protein 7 (125 aa).

An N-acetylmethionine modification is found at methionine 1. In terms of domain architecture, SUZ-C spans 1–29 (MQTPLATPVPVLRLPRGPDGSNRGFAPDG). The interval 1–52 (MQTPLATPVPVLRLPRGPDGSNRGFAPDGRRAPPKPEVPEPPESRESWEQQA) is disordered. Threonine 3 bears the Phosphothreonine mark. The 67-residue stretch at 59–125 (RYLRSLLAMV…SDIISYTFKP (67 aa)) folds into the Sm domain.

It belongs to the gemin-7 family. In terms of assembly, part of the core SMN complex that contains SMN1, GEMIN2/SIP1, DDX20/GEMIN3, GEMIN4, GEMIN5, GEMIN6, GEMIN7, GEMIN8 and STRAP/UNRIP. Part of the SMN-Sm complex that contains SMN1, GEMIN2/SIP1, DDX20/GEMIN3, GEMIN4, GEMIN5, GEMIN6, GEMIN7, GEMIN8, STRAP/UNRIP and the Sm proteins SNRPB, SNRPD1, SNRPD2, SNRPD3, SNRPE, SNRPF and SNRPG. Interacts with GEMIN6; the interaction is direct. Interacts with STRAP/UNRIP; the interaction is direct. Interacts with GEMIN8; the interaction is direct. Interacts with SNRPB, SNRPD2, SNRPD3 and SNRPE; the interaction is direct.

The protein resides in the nucleus. Its subcellular location is the nucleoplasm. It localises to the gem. It is found in the cytoplasm. The SMN complex catalyzes the assembly of small nuclear ribonucleoproteins (snRNPs), the building blocks of the spliceosome, and thereby plays an important role in the splicing of cellular pre-mRNAs. Most spliceosomal snRNPs contain a common set of Sm proteins SNRPB, SNRPD1, SNRPD2, SNRPD3, SNRPE, SNRPF and SNRPG that assemble in a heptameric protein ring on the Sm site of the small nuclear RNA to form the core snRNP (Sm core). In the cytosol, the Sm proteins SNRPD1, SNRPD2, SNRPE, SNRPF and SNRPG are trapped in an inactive 6S pICln-Sm complex by the chaperone CLNS1A that controls the assembly of the core snRNP. To assemble core snRNPs, the SMN complex accepts the trapped 5Sm proteins from CLNS1A forming an intermediate. Binding of snRNA inside 5Sm triggers eviction of the SMN complex, thereby allowing binding of SNRPD3 and SNRPB to complete assembly of the core snRNP. The chain is Gem-associated protein 7 (GEMIN7) from Bos taurus (Bovine).